The primary structure comprises 757 residues: RNA-directed RNA polymerase catalytic subunit (757 aa).

Residues 50 to 82 (SEKGKWTTNTETGAPQLNPIDGPLPEDNEPSGY) are disordered. The span at 55–64 (WTTNTETGAP) shows a compositional bias: polar residues. Short sequence motifs (nuclear localization signal) lie at residues 187–195 (RKRRVRDNM) and 203–216 (RTIG…NKRS). The segment at 249 to 256 (RGFVYFVE) is promoter-binding site. Residues 286–483 (VRKMMTNSQD…GINMSKKKSY (198 aa)) form the RdRp catalytic domain.

The protein belongs to the influenza viruses polymerase PB1 family. Influenza RNA polymerase is composed of three subunits: PB1, PB2 and PA. Interacts (via N-terminus) with PA (via C-terminus). Interacts (via C-terminus) with PB2 (via N-terminus); this interaction is essential for transcription initiation. In terms of processing, phosphorylated by host PRKCA.

The protein localises to the host nucleus. The protein resides in the host cytoplasm. The enzyme catalyses RNA(n) + a ribonucleoside 5'-triphosphate = RNA(n+1) + diphosphate. Its function is as follows. RNA-dependent RNA polymerase which is responsible for replication and transcription of virus RNA segments. The transcription of viral mRNAs occurs by a unique mechanism called cap-snatching. 5' methylated caps of cellular mRNAs are cleaved after 10-13 nucleotides by PA. In turn, these short capped RNAs are used as primers by PB1 for transcription of viral mRNAs. During virus replication, PB1 initiates RNA synthesis and copy vRNA into complementary RNA (cRNA) which in turn serves as a template for the production of more vRNAs. The polypeptide is RNA-directed RNA polymerase catalytic subunit (Influenza A virus (strain A/Duck/Germany/1949 H10N7)).